Here is a 707-residue protein sequence, read N- to C-terminus: Translation initiation factor IF-2 (707 aa).

Over residues 55–80 (LAEKPKEEKQKDQKNHEQEAQDKEEK) the composition is skewed to basic and acidic residues. Residues 55–88 (LAEKPKEEKQKDQKNHEQEAQDKEEKEIEEDSFY) are disordered. The region spanning 209–378 (PRPPIVTVMG…LLVAEMEDLK (170 aa)) is the tr-type G domain. Positions 218-225 (GHVDHGKT) are G1. 218–225 (GHVDHGKT) contacts GTP. The segment at 243 to 247 (GITQH) is G2. Positions 264-267 (DTPG) are G3. Residues 264–268 (DTPGH) and 318–321 (NKID) each bind GTP. The tract at residues 318–321 (NKID) is G4. Residues 354 to 356 (SAK) are G5.

Belongs to the TRAFAC class translation factor GTPase superfamily. Classic translation factor GTPase family. IF-2 subfamily.

It localises to the cytoplasm. Functionally, one of the essential components for the initiation of protein synthesis. Protects formylmethionyl-tRNA from spontaneous hydrolysis and promotes its binding to the 30S ribosomal subunits. Also involved in the hydrolysis of GTP during the formation of the 70S ribosomal complex. The sequence is that of Translation initiation factor IF-2 from Caldanaerobacter subterraneus subsp. tengcongensis (strain DSM 15242 / JCM 11007 / NBRC 100824 / MB4) (Thermoanaerobacter tengcongensis).